Here is a 143-residue protein sequence, read N- to C-terminus: MESTLGSDLARLVRVWRALIDHRLKPLELTQTHWVTLYNINRLPPEQSQIQLAKAIGIEQPSLVRTLDQLEEKGLITRHTCANDRRAKRIKLTEQSSPIIEQVDGVICSTRKEILGGISSDEIAVLSGLIDKLEKNIIQLQTK.

One can recognise an HTH marR-type domain in the interval 2-135 (ESTLGSDLAR…LSGLIDKLEK (134 aa)). Residues 49–72 (QIQLAKAIGIEQPSLVRTLDQLEE) constitute a DNA-binding region (H-T-H motif).

The protein belongs to the SlyA family. In terms of assembly, homodimer.

Its function is as follows. Transcription regulator that can specifically activate or repress expression of target genes. The chain is Transcriptional regulator SlyA from Yersinia pestis (strain Pestoides F).